Consider the following 105-residue polypeptide: Biogenesis of lysosome-related organelles complex 1 subunit SNN1 (105 aa).

Positions 70–105 form a coiled coil; sequence WKDDNERLDSLRKRVDSLKSRFQSLKLRSDKLEQRE.

The protein belongs to the SNAPIN family. In terms of assembly, component of the biogenesis of lysosome-related organelles complex-1 (BLOC-1).

Its subcellular location is the endosome. Functionally, component of the biogenesis of lysosome-related organelles complex-1 (BLOC-1), a complex involved in endosomal cargo sorting. The chain is Biogenesis of lysosome-related organelles complex 1 subunit SNN1 (SNN1) from Zygosaccharomyces rouxii (strain ATCC 2623 / CBS 732 / NBRC 1130 / NCYC 568 / NRRL Y-229).